We begin with the raw amino-acid sequence, 242 residues long: MFNISYAKRNAKYLFKLLAWCMMIEEAGPNIGNKQKVVLQLSKMLIMYIILHINAAFWTWRGYLKRCVLHFVFPRIFLPLLSDSPTITQAKKPSYCFAMDVGGEDISDLQVDQIVEEYSMDDLIRDRFRLSAISIAEAEAKKNGMEIGGPVVACVADLAFKYAENVAKDLELFAHHAGRKVVNMDDVVLSAHRNDNLAASLRSLCNELKAKEPQSERKRKKGSAKKEDKASSSNAVRITTDL.

The tract at residues 208–242 (LKAKEPQSERKRKKGSAKKEDKASSSNAVRITTDL) is disordered. Residues 231-242 (SSSNAVRITTDL) are compositionally biased toward polar residues.

It belongs to the TAF9 family. CENP-S/MHF1 subfamily.

The protein localises to the nucleus. Functionally, involved in the promotion of spontaneous somatic homologous recombination (HR) events, which is opposite to the function of FANCM in ordered HR. Only FANCM is essential for replicative repair in the absence of the endonuclease MUS81. Acts in the same pathway as FANCM to restrain class II meiotic crossing over (CO), and acts with FANCM during meiosis to repair interstrand cross-links (ICLs). This common pathway between MHF1 and FANCM is in parallel to the pathway that involves the RECQ4A helicase. This chain is Protein MHF1 homolog, found in Arabidopsis thaliana (Mouse-ear cress).